Here is a 1387-residue protein sequence, read N- to C-terminus: MKKEVGDACRLEDIVTNLYRLETVKQINYHQYVPSKADNQWSIQAELFLRRKNPKVLAALFSRELWCFSINDDPLPELNLELNNESESPQPERKGHFTPEFSKPHLPTPYAIFMKALRRMIYVNLTLSSNETIVPFGNSCIFQESYTFSTKILHFDPHLFENGDLTVAICSKDLGLSKLNAESLKHEVAVYLAPSGIRVYLPSTDLKKCYVSPPKNAQMFLKTLFVSHGINLIDVDGLKWVKLIPNANHLNGFTPTISHYLDEPKGNNFVIWPACLCFVQTASDVQTPQYTAFSRSPQLELDDCFDMIDGFIQLKLTSAYRTPGTSAGMGTVTGHNPLSTGGIFTDQFQGFNKHSANNSNNVSSTGENGKFSPEYSNDPNVTPLRDNKTSRQNFPTESYSSNGFITTPIINENITPTVDDIITETPSVKPQNDLWNEKKDVINSTSNINSKDASVGSSERKVELETAFESPAQNISIEEHEHVEFDKDLFGEDSDEDVSTRNKNEELVSVKEITDEMFDLAEDDDEADGSTSNSLKFDRPDTIESIDTDEKKTRTKRTYLDIPVDVITIEKTPTLYEDPGAPLPIETPKDRKKSIFAPLNFNPIFESNVDNKYKNGGKFSVNSNTNDEPIQFGISTSNISSSEDDDSDFSPADFNNNGPSAGKGLSYDPRDNDIPMIESSTYEPIAKDSLPELINPPSSSKDDSVASYNTIGTLMEKPVKSNLDAIWKPALSKSERADLPNQTINGVINDCNNSSNSNPTTYFENTPSLGPDTLYDNSKPRSSSANFLSTVEIDPKSEQTIQTAEQEQSESSRILPYLLRHMPLFSLPDVFLCQNPSLPPGKDFEDILEILTDQIVFNNDMFSDDRATESQFKGIKDCSVGTISDTMNQLFGNFSKLHGNEIIEEVFYLPEPSVFVKKSEDTIKIKSSSCYFTEYLNLKPNRGVKNFRALVLTTEAKNDCMSFVSQMSQTYSNHELGFCELTKLTNDDNKGLIYLKNFNQDTLLLLSAQIVSFCSTALSNIKNIPLLIFLPINKLSLTECISMILKFHVIRKEFKSKLPKADILLRLVNIDFLKNPLTPITAYTSLCMAIYNSLPPKSTKVTSLTNDLPKQIEFRTLKNASLSIHYDNYIHLAYLRSIDREWLCAAWSDTKGVESFVKTWYVGNSRTRFEQVCNDIWKITLQLASKNFGNVCLVLTRLDSVLPDDELIHWRRLSVATKDLHLAVVCVGDNTKLTLFDEDKTYPTFKNLFRTKSNPQTGISNSIDDLEIINIDEEVHGLIFSNPLQLANSQHRCAIKSGALIRFAKSEGDNFIDKFEVNLLNCPHADSSTLLKEILKQYRNLAGLNPWFGVSYGKDNFIPWHVVAVKNVMNSIVHVKSSFEKETHIID.

3 disordered regions span residues 81–102 (ELNN…PEFS), 354–400 (HSAN…ESYS), and 620–676 (SVNS…DIPM). Polar residues-rich tracts occupy residues 354 to 367 (HSAN…STGE) and 390 to 400 (SRQNFPTESYS).

This sequence belongs to the Mediator complex subunit 13 family. As to quaternary structure, component of the SRB8-11 complex, which itself associates with the Mediator complex.

It localises to the nucleus. In terms of biological role, component of the SRB8-11 complex. The SRB8-11 complex is a regulatory module of the Mediator complex which is itself involved in regulation of basal and activated RNA polymerase II-dependent transcription. The SRB8-11 complex may be involved in the transcriptional repression of a subset of genes regulated by Mediator. It may inhibit the association of the Mediator complex with RNA polymerase II to form the holoenzyme complex. This chain is Mediator of RNA polymerase II transcription subunit 13 (SSN2), found in Kluyveromyces lactis (strain ATCC 8585 / CBS 2359 / DSM 70799 / NBRC 1267 / NRRL Y-1140 / WM37) (Yeast).